The sequence spans 260 residues: 14-3-3-like protein (260 aa).

The interval 240 to 260 (DMQDDGGDEIKEAAPKPDEQY) is disordered. A compositionally biased stretch (basic and acidic residues) spans 247–260 (DEIKEAAPKPDEQY).

This sequence belongs to the 14-3-3 family.

The polypeptide is 14-3-3-like protein (Oenothera elata subsp. hookeri (Hooker's evening primrose)).